The primary structure comprises 558 residues: MSAKYIFVTGGVVSSLGKGLAAASIGCLLEMRGLKVNMQKFDPYLNVDPGTMSPFQHGEVFVTDDGAETDLDLGHYERYTHSKLTRENNWTTGRIYEQIITKERRGDYLGKTVQVIPHVTNEIKAAMKRAAVDVDVAIVEIGGTVGDIESLPFIEAIRQMRQELGRDNTLFVHLTLVPYIAAAGELKTKPTQHSVKELLSIGIQPDILLCRTDRFLSKDIKGKIALFCNVEDEAVITAKDVASIYEVPLGFHHEGVDRLVMKYLRLDAKEPDLTRWQDIVHRVYNPKDEVIIGIIGKYVEYEDSYKSLKEALVHGSLAHNLKLNVTWIEAEGLETKDESYYEQLRHVDGILVPGGFGKRGIAGMLNGIRFAREHKVPYFGICLGMQTASIEFARNVCGLEDANSSEFDPATPHRVIYKLRELRGVEELGGTMRLGAWACKLEPGSHAAKAYGTTEISERHRHRYEFNQEYREQMAAAGLKFTGTTPDGTYIEIVELDQNEHPYFLGCQFHPEFKSKPLEPHPLFKAFIGASYEHRMKRTHTKEREEESVFLRPERVGK.

The tract at residues 1–266 (MSAKYIFVTG…DRLVMKYLRL (266 aa)) is amidoligase domain. Serine 14 serves as a coordination point for CTP. Serine 14 serves as a coordination point for UTP. ATP is bound by residues 15–20 (SLGKGL) and aspartate 72. Mg(2+) contacts are provided by aspartate 72 and glutamate 140. Residues 147-149 (DIE), 187-192 (KTKPTQ), and lysine 223 each bind CTP. Residues 187–192 (KTKPTQ) and lysine 223 each bind UTP. ATP is bound at residue 239-241 (KDV). One can recognise a Glutamine amidotransferase type-1 domain in the interval 291–537 (IIGIIGKYVE…IGASYEHRMK (247 aa)). An L-glutamine-binding site is contributed by glycine 355. Cysteine 382 serves as the catalytic Nucleophile; for glutamine hydrolysis. L-glutamine contacts are provided by residues 383 to 386 (LGMQ), glutamate 406, and arginine 463. Residues histidine 510 and glutamate 512 contribute to the active site. Residues 539–558 (THTKEREEESVFLRPERVGK) are disordered. Over residues 542-558 (KEREEESVFLRPERVGK) the composition is skewed to basic and acidic residues.

It belongs to the CTP synthase family. As to quaternary structure, homotetramer.

The enzyme catalyses UTP + L-glutamine + ATP + H2O = CTP + L-glutamate + ADP + phosphate + 2 H(+). It catalyses the reaction L-glutamine + H2O = L-glutamate + NH4(+). The catalysed reaction is UTP + NH4(+) + ATP = CTP + ADP + phosphate + 2 H(+). The protein operates within pyrimidine metabolism; CTP biosynthesis via de novo pathway; CTP from UDP: step 2/2. With respect to regulation, allosterically activated by GTP, when glutamine is the substrate; GTP has no effect on the reaction when ammonia is the substrate. The allosteric effector GTP functions by stabilizing the protein conformation that binds the tetrahedral intermediate(s) formed during glutamine hydrolysis. Inhibited by the product CTP, via allosteric rather than competitive inhibition. Catalyzes the ATP-dependent amination of UTP to CTP with either L-glutamine or ammonia as the source of nitrogen. Regulates intracellular CTP levels through interactions with the four ribonucleotide triphosphates. The polypeptide is CTP synthase (Koribacter versatilis (strain Ellin345)).